We begin with the raw amino-acid sequence, 201 residues long: Recombination protein RecR (201 aa).

The C4-type zinc finger occupies 57–72 (CTHCRTFTEEESCAIC). A Toprim domain is found at 81–176 (GFLCVVEQPS…KVSRIAHGIP (96 aa)).

Belongs to the RecR family.

Functionally, may play a role in DNA repair. It seems to be involved in an RecBC-independent recombinational process of DNA repair. It may act with RecF and RecO. The polypeptide is Recombination protein RecR (Histophilus somni (strain 2336) (Haemophilus somnus)).